The following is a 97-amino-acid chain: Co-chaperonin GroES (97 aa).

Belongs to the GroES chaperonin family. In terms of assembly, heptamer of 7 subunits arranged in a ring. Interacts with the chaperonin GroEL.

It is found in the cytoplasm. Functionally, together with the chaperonin GroEL, plays an essential role in assisting protein folding. The GroEL-GroES system forms a nano-cage that allows encapsulation of the non-native substrate proteins and provides a physical environment optimized to promote and accelerate protein folding. GroES binds to the apical surface of the GroEL ring, thereby capping the opening of the GroEL channel. This is Co-chaperonin GroES from Blochmanniella floridana.